We begin with the raw amino-acid sequence, 226 residues long: ADP-ribosylation factor-like protein 6-interacting protein 6 (226 aa).

Positions 1-49 are disordered; sequence MSFVESWRFAGARRRRQVTPGPATRPGYSDYTQGDSWGEGEGDEDEGCD. Ser2 and Ser36 each carry phosphoserine. Over residues 38-48 the composition is skewed to acidic residues; that stretch reads GEGEGDEDEGC. Residues Ser60, Ser65, and Ser80 each carry the phosphoserine modification. 3 helical membrane-spanning segments follow: residues 111–131, 150–170, and 205–225; these read ILCS…AYMI, LLGF…CCSF, and MGYS…AWCL.

The protein belongs to the ARL6IP6 family.

The protein localises to the nucleus inner membrane. This Mus musculus (Mouse) protein is ADP-ribosylation factor-like protein 6-interacting protein 6 (Arl6ip6).